The chain runs to 861 residues: Protein HIR1 (861 aa).

7 WD repeats span residues 14–54, 74–113, 132–171, 174–213, 227–270, 295–337, and 341–382; these read EHKS…KFAS, RHAG…TQPM, AHDN…KVKR, VHQS…ETSF, PLTT…SPVS, STTD…PLIV, and ICGK…EAIP. Positions 450-471 are disordered; that stretch reads KRAQLTGTGNHTDNNTTSKAEP. Over residues 455–466 the composition is skewed to low complexity; that stretch reads TGTGNHTDNNTT.

It belongs to the WD repeat HIR1 family.

It localises to the nucleus. Required for replication-independent chromatin assembly and for the periodic repression of histone gene transcription during the cell cycle. This Kluyveromyces lactis (strain ATCC 8585 / CBS 2359 / DSM 70799 / NBRC 1267 / NRRL Y-1140 / WM37) (Yeast) protein is Protein HIR1 (HIR1).